Reading from the N-terminus, the 210-residue chain is MAIVLGAKERKDKKHSTLRRIRSQGGIPAVLYGKKVDNKMISISAADLEKALREGGRHSLVTLKVDGEDYSVLLREVQRDPLRGELLHADFQAVDMSAEVDVDVEVRLVGEAPGVKDGGVLQQNLHELSIRVLPANIPPAIEVDISGLQVGDVITVGDVQTGGTFEINHEPSEVIATILPPQQEEEIHSGEQQEPGQPEAEEGRETTPEG.

The segment at 179–210 is disordered; that stretch reads LPPQQEEEIHSGEQQEPGQPEAEEGRETTPEG. The span at 201–210 shows a compositional bias: basic and acidic residues; the sequence is EEGRETTPEG.

Belongs to the bacterial ribosomal protein bL25 family. CTC subfamily. As to quaternary structure, part of the 50S ribosomal subunit; part of the 5S rRNA/L5/L18/L25 subcomplex. Contacts the 5S rRNA. Binds to the 5S rRNA independently of L5 and L18.

Its function is as follows. This is one of the proteins that binds to the 5S RNA in the ribosome where it forms part of the central protuberance. In Geobacillus thermodenitrificans (strain NG80-2), this protein is Large ribosomal subunit protein bL25.